The primary structure comprises 101 residues: Urease subunit beta (101 aa).

It belongs to the urease beta subunit family. In terms of assembly, heterotrimer of UreA (gamma), UreB (beta) and UreC (alpha) subunits. Three heterotrimers associate to form the active enzyme.

The protein localises to the cytoplasm. It catalyses the reaction urea + 2 H2O + H(+) = hydrogencarbonate + 2 NH4(+). Its pathway is nitrogen metabolism; urea degradation; CO(2) and NH(3) from urea (urease route): step 1/1. This Paraburkholderia xenovorans (strain LB400) protein is Urease subunit beta.